Here is a 296-residue protein sequence, read N- to C-terminus: Release factor glutamine methyltransferase (296 aa).

S-adenosyl-L-methionine contacts are provided by residues G133 to G137, D156, and N201. Position 201–204 (N201–Y204) interacts with substrate.

Belongs to the protein N5-glutamine methyltransferase family. PrmC subfamily.

It catalyses the reaction L-glutaminyl-[peptide chain release factor] + S-adenosyl-L-methionine = N(5)-methyl-L-glutaminyl-[peptide chain release factor] + S-adenosyl-L-homocysteine + H(+). Methylates the class 1 translation termination release factors RF1/PrfA and RF2/PrfB on the glutamine residue of the universally conserved GGQ motif. The polypeptide is Release factor glutamine methyltransferase (Rhodopirellula baltica (strain DSM 10527 / NCIMB 13988 / SH1)).